The following is a 192-amino-acid chain: FMN-dependent NADH:quinone oxidoreductase 1 (192 aa).

FMN-binding positions include Ser-9 and 15–17; that span reads SYS.

This sequence belongs to the azoreductase type 1 family. As to quaternary structure, homodimer. FMN is required as a cofactor.

It catalyses the reaction 2 a quinone + NADH + H(+) = 2 a 1,4-benzosemiquinone + NAD(+). The enzyme catalyses N,N-dimethyl-1,4-phenylenediamine + anthranilate + 2 NAD(+) = 2-(4-dimethylaminophenyl)diazenylbenzoate + 2 NADH + 2 H(+). Quinone reductase that provides resistance to thiol-specific stress caused by electrophilic quinones. Its function is as follows. Also exhibits azoreductase activity. Catalyzes the reductive cleavage of the azo bond in aromatic azo compounds to the corresponding amines. The chain is FMN-dependent NADH:quinone oxidoreductase 1 from Colwellia psychrerythraea (strain 34H / ATCC BAA-681) (Vibrio psychroerythus).